The primary structure comprises 238 residues: Probable transcriptional regulatory protein SPD_1725 (238 aa).

Belongs to the TACO1 family. YeeN subfamily.

It localises to the cytoplasm. In Streptococcus pneumoniae serotype 2 (strain D39 / NCTC 7466), this protein is Probable transcriptional regulatory protein SPD_1725.